Here is a 297-residue protein sequence, read N- to C-terminus: UDP-N-acetylenolpyruvoylglucosamine reductase (297 aa).

The region spanning 27–191 (TGGNADIFVM…LDATFSLELE (165 aa)) is the FAD-binding PCMH-type domain. The active site involves Arg170. Residue Ser220 is the Proton donor of the active site. Residue Glu290 is part of the active site.

The protein belongs to the MurB family. FAD is required as a cofactor.

The protein resides in the cytoplasm. It catalyses the reaction UDP-N-acetyl-alpha-D-muramate + NADP(+) = UDP-N-acetyl-3-O-(1-carboxyvinyl)-alpha-D-glucosamine + NADPH + H(+). It participates in cell wall biogenesis; peptidoglycan biosynthesis. Functionally, cell wall formation. The sequence is that of UDP-N-acetylenolpyruvoylglucosamine reductase from Listeria welshimeri serovar 6b (strain ATCC 35897 / DSM 20650 / CCUG 15529 / CIP 8149 / NCTC 11857 / SLCC 5334 / V8).